A 260-amino-acid polypeptide reads, in one-letter code: MAVISMKQLLEAGVHFGHQTRRWNPKMAKYIFTERNGIHVIDLQQTVKYADQAYDFIRDAAANDAIILFVGTKKQAAEAVKDEAERAGQYYINHRWLGGTLTNWSTIQKRVARLKEIKRMEEDGTFEVLPKKEVALLNKQRARLEKFLGGIEEMPRIPDVMYVVDPHKEQIAVKEAKKLGIPVVAMVDTNTDPDDIDVIIPSNDDAIRAVKLITAKMADAIIEGRQGEDSVESVEAELAATETQADSIEEIVEVVEGDNA.

The protein belongs to the universal ribosomal protein uS2 family.

The polypeptide is Small ribosomal subunit protein uS2 (Streptococcus gordonii (strain Challis / ATCC 35105 / BCRC 15272 / CH1 / DL1 / V288)).